Reading from the N-terminus, the 349-residue chain is UDP-3-O-acylglucosamine N-acyltransferase (349 aa).

The Proton acceptor role is filled by His-240.

The protein belongs to the transferase hexapeptide repeat family. LpxD subfamily. Homotrimer.

It carries out the reaction a UDP-3-O-[(3R)-3-hydroxyacyl]-alpha-D-glucosamine + a (3R)-hydroxyacyl-[ACP] = a UDP-2-N,3-O-bis[(3R)-3-hydroxyacyl]-alpha-D-glucosamine + holo-[ACP] + H(+). The protein operates within bacterial outer membrane biogenesis; LPS lipid A biosynthesis. Its function is as follows. Catalyzes the N-acylation of UDP-3-O-acylglucosamine using 3-hydroxyacyl-ACP as the acyl donor. Is involved in the biosynthesis of lipid A, a phosphorylated glycolipid that anchors the lipopolysaccharide to the outer membrane of the cell. This is UDP-3-O-acylglucosamine N-acyltransferase from Porphyromonas gingivalis (strain ATCC BAA-308 / W83).